Here is a 371-residue protein sequence, read N- to C-terminus: RxLR effector protein PITG_12731 (371 aa).

The signal sequence occupies residues 1-24 (MRFYSVLLTIVTLIASTYDAKVNA). The RxLR-dEER motif lies at 43–53 (RMLRADHADER).

Belongs to the RxLR effector family.

It is found in the secreted. The protein resides in the host nucleus. It localises to the host cytoplasm. Effector that enhances P.infestans colonization of Nicotiana benthamiana leaves. In Phytophthora infestans (strain T30-4) (Potato late blight agent), this protein is RxLR effector protein PITG_12731.